We begin with the raw amino-acid sequence, 187 residues long: ATP synthase subunit b (187 aa).

The helical transmembrane segment at 36-53 threads the bilayer; it reads PYQWVSVAMLVLIAIMLW.

This sequence belongs to the ATPase B chain family. In terms of assembly, F-type ATPases have 2 components, F(1) - the catalytic core - and F(0) - the membrane proton channel. F(1) has five subunits: alpha(3), beta(3), gamma(1), delta(1), epsilon(1). F(0) has four main subunits: a(1), b(2) and c(10-14). The alpha and beta chains form an alternating ring which encloses part of the gamma chain. F(1) is attached to F(0) by a central stalk formed by the gamma and epsilon chains, while a peripheral stalk is formed by the delta and b chains.

Its subcellular location is the cell inner membrane. F(1)F(0) ATP synthase produces ATP from ADP in the presence of a proton or sodium gradient. F-type ATPases consist of two structural domains, F(1) containing the extramembraneous catalytic core and F(0) containing the membrane proton channel, linked together by a central stalk and a peripheral stalk. During catalysis, ATP synthesis in the catalytic domain of F(1) is coupled via a rotary mechanism of the central stalk subunits to proton translocation. In terms of biological role, component of the F(0) channel, it forms part of the peripheral stalk, linking F(1) to F(0). The chain is ATP synthase subunit b from Erythrobacter litoralis (strain HTCC2594).